Consider the following 142-residue polypeptide: Large ribosomal subunit protein uL13 (142 aa).

It belongs to the universal ribosomal protein uL13 family. In terms of assembly, part of the 50S ribosomal subunit.

Functionally, this protein is one of the early assembly proteins of the 50S ribosomal subunit, although it is not seen to bind rRNA by itself. It is important during the early stages of 50S assembly. The polypeptide is Large ribosomal subunit protein uL13 (Thermococcus kodakarensis (strain ATCC BAA-918 / JCM 12380 / KOD1) (Pyrococcus kodakaraensis (strain KOD1))).